The following is a 474-amino-acid chain: tRNA-2-methylthio-N(6)-dimethylallyladenosine synthase (474 aa).

One can recognise an MTTase N-terminal domain in the interval 3–120; sequence KKLHIKTWGC…LPDMIEQVRR (118 aa). [4Fe-4S] cluster contacts are provided by C12, C49, C83, C157, C161, and C164. The Radical SAM core domain occupies 143 to 375; the sequence is RAEGPTAFVS…QDRITQQAMR (233 aa). One can recognise a TRAM domain in the interval 378–441; that stretch reads RHMMGTVQRI…TNSLRGKFIR (64 aa).

It belongs to the methylthiotransferase family. MiaB subfamily. In terms of assembly, monomer. Requires [4Fe-4S] cluster as cofactor.

It is found in the cytoplasm. The enzyme catalyses N(6)-dimethylallyladenosine(37) in tRNA + (sulfur carrier)-SH + AH2 + 2 S-adenosyl-L-methionine = 2-methylsulfanyl-N(6)-dimethylallyladenosine(37) in tRNA + (sulfur carrier)-H + 5'-deoxyadenosine + L-methionine + A + S-adenosyl-L-homocysteine + 2 H(+). Its function is as follows. Catalyzes the methylthiolation of N6-(dimethylallyl)adenosine (i(6)A), leading to the formation of 2-methylthio-N6-(dimethylallyl)adenosine (ms(2)i(6)A) at position 37 in tRNAs that read codons beginning with uridine. In Shewanella sp. (strain W3-18-1), this protein is tRNA-2-methylthio-N(6)-dimethylallyladenosine synthase.